We begin with the raw amino-acid sequence, 914 residues long: MASESSPLLAYRLLGEEGVALPANGAGGPGGASARKLSTFLGVVVPTVLSMFSIVVFLRIGFVVGHAGLLQALAMLLVAYFILALTVLSVCAIATNGAVQGGGAYFMISRTLGPEVGGSIGLMFYLANVCGCAVSLLGLVESVLDVFGADATGPSGLRVLPQGYGWNLLYGSLLLGLVGGVCTLGAGLYARASFLTFLLVSGSLASVLISFVAVGPRDIRLTPRPGPNGSSLPPRFGHFTGFNSSTLKDNLGAGYAEDYTTGAVMNFASVFAVLFNGCTGIMAGANMSGELKDPSRAIPLGTIVAVAYTFFVYVLLFFLSSFTCDRTLLQEDYGFFRAISLWPPLVLIGIYATALSASMSSLIGASRILHALARDDLFGVILAPAKVVSRGGNPWAAVLYSWGLVQLVLLAGKLNTLAAVVTVFYLVAYAAVDLSCLSLEWASAPNFRPTFSLFSWHTCLLGVASCLLMMFLISPGAAGGSLLLMGLLAALLTARGGPSSWGYVSQALLFHQVRKYLLRLDVRKDHVKFWRPQLLLLVGNPRGALPLLRLANQLKKGGLYVLGHVTLGDLDSLPSDPVQPQYGAWLSLVDRAQVKAFVDLTLSPSVRQGAQHLLRISGLGGMKPNTLVLGFYDDAPPQDHFLTDPAFSEPADSTREGSSPALSTLFPPPRAPGSPRALNPQDYVATVADALKMNKNVVLARASGALPPERLSRGSGGTSQLHHVDVWPLNLLRPRGGPGYVDVCGLFLLQMATILGMVPAWHSARLRIFLCLGPREAPGAAEGRLRALLSQLRIRAEVQEVVWGEGAGAGEPEAEEEGDFVNSGRGDAEAEALARSANALVRAQQGRGTGGGPGGPEGGDAEGPITALTFLYLPRPPADPARYPRYLALLETLTRDLGPTLLVHGVTPVTCTDL.

Residues 1-36 (MASESSPLLAYRLLGEEGVALPANGAGGPGGASARK) lie on the Cytoplasmic side of the membrane. Serine 6 is subject to Phosphoserine. The chain crosses the membrane as a helical span at residues 37-57 (LSTFLGVVVPTVLSMFSIVVF). Over 58 to 72 (LRIGFVVGHAGLLQA) the chain is Extracellular. The chain crosses the membrane as a helical span at residues 73 to 93 (LAMLLVAYFILALTVLSVCAI). Topologically, residues 94–119 (ATNGAVQGGGAYFMISRTLGPEVGGS) are cytoplasmic. A helical membrane pass occupies residues 120-140 (IGLMFYLANVCGCAVSLLGLV). At 141 to 167 (ESVLDVFGADATGPSGLRVLPQGYGWN) the chain is on the extracellular side. The helical transmembrane segment at 168-188 (LLYGSLLLGLVGGVCTLGAGL) threads the bilayer. Residues 189-193 (YARAS) are Cytoplasmic-facing. Residues 194 to 214 (FLTFLLVSGSLASVLISFVAV) traverse the membrane as a helical segment. The Extracellular portion of the chain corresponds to 215 to 262 (GPRDIRLTPRPGPNGSSLPPRFGHFTGFNSSTLKDNLGAGYAEDYTTG). Residues asparagine 228 and asparagine 243 are each glycosylated (N-linked (GlcNAc...) asparagine). A helical transmembrane segment spans residues 263–283 (AVMNFASVFAVLFNGCTGIMA). The Cytoplasmic portion of the chain corresponds to 284 to 297 (GANMSGELKDPSRA). The helical transmembrane segment at 298 to 318 (IPLGTIVAVAYTFFVYVLLFF) threads the bilayer. Over 319–338 (LSSFTCDRTLLQEDYGFFRA) the chain is Extracellular. A helical membrane pass occupies residues 339–359 (ISLWPPLVLIGIYATALSASM). Residues 360 to 390 (SSLIGASRILHALARDDLFGVILAPAKVVSR) lie on the Cytoplasmic side of the membrane. The helical transmembrane segment at 391–411 (GGNPWAAVLYSWGLVQLVLLA) threads the bilayer. The Extracellular portion of the chain corresponds to 412–416 (GKLNT). The helical transmembrane segment at 417-437 (LAAVVTVFYLVAYAAVDLSCL) threads the bilayer. The Cytoplasmic portion of the chain corresponds to 438–466 (SLEWASAPNFRPTFSLFSWHTCLLGVASC). The helical transmembrane segment at 467–487 (LLMMFLISPGAAGGSLLLMGL) threads the bilayer. Topologically, residues 488 to 740 (LAALLTARGG…LLRPRGGPGY (253 aa)) are extracellular. Residues 642 to 678 (LTDPAFSEPADSTREGSSPALSTLFPPPRAPGSPRAL) form a disordered region. A helical membrane pass occupies residues 741-761 (VDVCGLFLLQMATILGMVPAW). At 762 to 914 (HSARLRIFLC…GVTPVTCTDL (153 aa)) the chain is on the cytoplasmic side. The disordered stretch occupies residues 844-863 (QQGRGTGGGPGGPEGGDAEG). Over residues 847 to 858 (RGTGGGPGGPEG) the composition is skewed to gly residues.

This sequence belongs to the SLC12A transporter family. In terms of assembly, interacts with SLC12A1. In terms of tissue distribution, highly expressed in placenta, brain and kidney. Lower expression in lung, liver and heart.

It localises to the cell membrane. It is found in the lysosome membrane. May be an inhibitor of SLC12A1. Seems to correspond to a subunit of a multimeric transport system and thus, additional subunits may be required for its function. May play a role in lysosomal ion flux and osmoregulation. The sequence is that of Solute carrier family 12 member 9 (SLC12A9) from Homo sapiens (Human).